Here is a 109-residue protein sequence, read N- to C-terminus: uncharacterized protein (109 aa).

A helical membrane pass occupies residues 82–102; sequence SLSFLLLLFFYFNNYYFLSMT.

It localises to the membrane. This is an uncharacterized protein from Saccharomyces cerevisiae (strain ATCC 204508 / S288c) (Baker's yeast).